Reading from the N-terminus, the 315-residue chain is tRNA-cytidine(32) 2-sulfurtransferase (315 aa).

The PP-loop motif motif lies at 54–59 (SGGKDS). Cys129, Cys132, and Cys220 together coordinate [4Fe-4S] cluster.

The protein belongs to the TtcA family. Homodimer. Mg(2+) is required as a cofactor. It depends on [4Fe-4S] cluster as a cofactor.

It localises to the cytoplasm. It catalyses the reaction cytidine(32) in tRNA + S-sulfanyl-L-cysteinyl-[cysteine desulfurase] + AH2 + ATP = 2-thiocytidine(32) in tRNA + L-cysteinyl-[cysteine desulfurase] + A + AMP + diphosphate + H(+). Its pathway is tRNA modification. Catalyzes the ATP-dependent 2-thiolation of cytidine in position 32 of tRNA, to form 2-thiocytidine (s(2)C32). The sulfur atoms are provided by the cysteine/cysteine desulfurase (IscS) system. In Bordetella avium (strain 197N), this protein is tRNA-cytidine(32) 2-sulfurtransferase.